Reading from the N-terminus, the 1651-residue chain is Vitellogenin-6 (1651 aa).

The signal sequence occupies residues methionine 1–alanine 15. The Vitellogenin domain maps to phenylalanine 34–methionine 716. 2 N-linked (GlcNAc...) asparagine glycosylation sites follow: asparagine 252 and asparagine 1288. Positions alanine 1340–asparagine 1515 constitute a VWFD domain. Cystine bridges form between cysteine 1342-cysteine 1479 and cysteine 1364-cysteine 1514. The segment at phenylalanine 1527–threonine 1556 is disordered.

Synthesized in Caenorhabditis only by 32 cells building the intestine of adult hermaphroditic individuals; they are cotranslationally secreted into the body cavity and subsequently taken up by the gonad.

Its subcellular location is the secreted. Functionally, precursor of the egg-yolk proteins that are sources of nutrients during embryonic development. May play a role in cholesterol uptake. May be involved in thermotolerance. In Caenorhabditis elegans, this protein is Vitellogenin-6 (vit-6).